A 324-amino-acid chain; its full sequence is Probable non-intrinsic ABC protein 5 (324 aa).

In terms of domain architecture, ABC transporter spans 2 to 111 (DRERYDKVIE…ADLTLVMKDG (110 aa)). The next 2 membrane-spanning stretches (helical) occupy residues 212–232 (YITL…QILF) and 259–279 (LSTL…CILV). In terms of domain architecture, ABC transmembrane type-1 spans 222–324 (VPFILLGQIL…TCSKTCIYSS (103 aa)).

The protein belongs to the ABC transporter superfamily.

Its subcellular location is the membrane. The sequence is that of Probable non-intrinsic ABC protein 5 (NAP5) from Arabidopsis thaliana (Mouse-ear cress).